The primary structure comprises 461 residues: Acetylcholine receptor subunit alpha (461 aa).

Positions 1 to 24 (MILCSYWHVGLVLLLFSCCGLVLG) are cleaved as a signal peptide. Residues 25–234 (SEHETRLVAN…ITYHFIMQRI (210 aa)) lie on the Extracellular side of the membrane. 2 cysteine pairs are disulfide-bonded: Cys152-Cys166 and Cys216-Cys217. A glycan (N-linked (GlcNAc...) asparagine) is linked at Asn165. Transmembrane regions (helical) follow at residues 235 to 259 (PLYF…VFYL), 267 to 285 (MTLS…LVIV), and 301 to 320 (YMLF…VVVI). Residues 321 to 432 (NTHHRSPSTH…WKYVAMVIDH (112 aa)) lie on the Cytoplasmic side of the membrane. Residues 433–451 (ILLCVFMLICIIGTVSVFA) form a helical membrane-spanning segment.

This sequence belongs to the ligand-gated ion channel (TC 1.A.9) family. Acetylcholine receptor (TC 1.A.9.1) subfamily. Alpha-1/CHRNA1 sub-subfamily. In terms of assembly, pentamer of two alpha chains, and one each of the beta, delta, and gamma chains.

It localises to the postsynaptic cell membrane. It is found in the cell membrane. The catalysed reaction is K(+)(in) = K(+)(out). It carries out the reaction Na(+)(in) = Na(+)(out). Functionally, upon acetylcholine binding, the AChR responds by an extensive change in conformation that affects all subunits and leads to opening of an ion-conducting channel across the plasma membrane. This Tetronarce californica (Pacific electric ray) protein is Acetylcholine receptor subunit alpha (CHRNA1).